Here is a 119-residue protein sequence, read N- to C-terminus: MHDFCFTIPYGMLLIGGGFIGYMKKGSITSFAGGAGTGLLLILAGYISLKAFEKKKNSTIAMVLQTVIAAALTLVMGQRYLLTGKIMPAGLVAGISALMTCFYVYKIATGGNKFPAKAE.

The next 3 helical transmembrane spans lie at 27 to 47, 57 to 77, and 84 to 104; these read SITSFAGGAGTGLLLILAGYI, NSTIAMVLQTVIAAALTLVMG, and GKIMPAGLVAGISALMTCFYV.

Belongs to the TMEM14 family.

The protein resides in the membrane. In terms of biological role, may be involved in free fatty acids export. This chain is Protein FATTY ACID EXPORT 6, found in Arabidopsis thaliana (Mouse-ear cress).